The primary structure comprises 193 residues: Dirigent protein 11 (193 aa).

Positions 1 to 33 (MLQITNMATPFLLLLLPLIFSTVLLLTITVTQS) are cleaved as a signal peptide. Residues N78 and N136 are each glycosylated (N-linked (GlcNAc...) asparagine).

It belongs to the plant dirigent protein family. In terms of assembly, homodimer.

It localises to the secreted. It is found in the extracellular space. The protein resides in the apoplast. Functionally, dirigent proteins impart stereoselectivity on the phenoxy radical-coupling reaction, yielding optically active lignans from two molecules of coniferyl alcohol in the biosynthesis of lignans, flavonolignans, and alkaloids and thus plays a central role in plant secondary metabolism. This Arabidopsis thaliana (Mouse-ear cress) protein is Dirigent protein 11 (DIR11).